Here is a 188-residue protein sequence, read N- to C-terminus: Putative glutamine amidotransferase-like protein YvdE homolog (188 aa).

The 172-residue stretch at serine 17–alanine 188 folds into the Glutamine amidotransferase type-1 domain.

The chain is Putative glutamine amidotransferase-like protein YvdE homolog from Lactococcus lactis subsp. cremoris (Streptococcus cremoris).